The following is a 348-amino-acid chain: N-acetyl-gamma-glutamyl-phosphate reductase (348 aa).

Cys-149 is an active-site residue.

This sequence belongs to the NAGSA dehydrogenase family. Type 1 subfamily.

It is found in the cytoplasm. The catalysed reaction is N-acetyl-L-glutamate 5-semialdehyde + phosphate + NADP(+) = N-acetyl-L-glutamyl 5-phosphate + NADPH + H(+). It functions in the pathway amino-acid biosynthesis; L-arginine biosynthesis; N(2)-acetyl-L-ornithine from L-glutamate: step 3/4. Functionally, catalyzes the NADPH-dependent reduction of N-acetyl-5-glutamyl phosphate to yield N-acetyl-L-glutamate 5-semialdehyde. The protein is N-acetyl-gamma-glutamyl-phosphate reductase of Cellvibrio japonicus (strain Ueda107) (Pseudomonas fluorescens subsp. cellulosa).